Here is a 555-residue protein sequence, read N- to C-terminus: Formate--tetrahydrofolate ligase (555 aa).

65-72 (TPAGEGKS) provides a ligand contact to ATP.

Belongs to the formate--tetrahydrofolate ligase family.

The enzyme catalyses (6S)-5,6,7,8-tetrahydrofolate + formate + ATP = (6R)-10-formyltetrahydrofolate + ADP + phosphate. It participates in one-carbon metabolism; tetrahydrofolate interconversion. In Staphylococcus carnosus (strain TM300), this protein is Formate--tetrahydrofolate ligase.